The sequence spans 483 residues: GTPase Der (483 aa).

EngA-type G domains follow at residues 3-167 (FTLA…GEER) and 212-387 (LRIA…EIWN). Residues 9-16 (GRPNVGKS), 56-60 (DTAGL), 119-122 (NKAE), 218-225 (GRPNAGKS), 265-269 (DTAGM), and 330-333 (NKWD) each bind GTP. The KH-like domain occupies 388-472 (RRISTGRLNR…PIRLSLRTSD (85 aa)).

Belongs to the TRAFAC class TrmE-Era-EngA-EngB-Septin-like GTPase superfamily. EngA (Der) GTPase family. Associates with the 50S ribosomal subunit.

Functionally, GTPase that plays an essential role in the late steps of ribosome biogenesis. The chain is GTPase Der from Brucella abortus (strain 2308).